A 284-amino-acid polypeptide reads, in one-letter code: 4-diphosphocytidyl-2-C-methyl-D-erythritol kinase (284 aa).

The active site involves Lys-14. 98–108 (PMGGGLGGGSS) contacts ATP. Residue Asp-140 is part of the active site.

This sequence belongs to the GHMP kinase family. IspE subfamily.

It carries out the reaction 4-CDP-2-C-methyl-D-erythritol + ATP = 4-CDP-2-C-methyl-D-erythritol 2-phosphate + ADP + H(+). The protein operates within isoprenoid biosynthesis; isopentenyl diphosphate biosynthesis via DXP pathway; isopentenyl diphosphate from 1-deoxy-D-xylulose 5-phosphate: step 3/6. In terms of biological role, catalyzes the phosphorylation of the position 2 hydroxy group of 4-diphosphocytidyl-2C-methyl-D-erythritol. This is 4-diphosphocytidyl-2-C-methyl-D-erythritol kinase from Shewanella baltica (strain OS195).